A 309-amino-acid chain; its full sequence is Taste receptor type 2 member 46 (309 aa).

Met-1 is a topological domain (extracellular). Residues 2–22 (ITFLPIIFSILIVVTFVIGNF) form a helical membrane-spanning segment. The Cytoplasmic segment spans residues 23 to 46 (ANGFIALANSIEWFKRQKISFADQ). The chain crosses the membrane as a helical span at residues 47 to 67 (ILTALAVSRVGLLWVLLLNWY). Residues 68 to 86 (ATELNPAFYSIEVRITAYN) lie on the Extracellular side of the membrane. Residues 87–107 (VWAVISHFSNWLATSLSIFYL) traverse the membrane as a helical segment. Residues 108–126 (LKIANFSNLIFLRLKRRVK) are Cytoplasmic-facing. A helical membrane pass occupies residues 127–147 (SVVLVILLGPLLFLVCHLFVI). Over 148–178 (NMNQIIWTKEYEGNMTWKIKLRSAMYLSDTT) the chain is Extracellular. An N-linked (GlcNAc...) asparagine glycan is attached at Asn-161. Residues 179-199 (VTILANLVPFTLTLISFLLLI) form a helical membrane-spanning segment. The Cytoplasmic segment spans residues 200–229 (CSLCKHLKKMQLHGKGSQDPSMKVHIKALQ). The chain crosses the membrane as a helical span at residues 230-250 (TVTSFLLLCAIYFLSVIMSVW). The Extracellular portion of the chain corresponds to 251-259 (SFESLENKP). A helical membrane pass occupies residues 260–280 (VFMFCEAITFSYPSTHPFILI). At 281–309 (WGNKKLKQTFLSVLWHVRYWVKGEKPSSS) the chain is on the cytoplasmic side.

Belongs to the G-protein coupled receptor T2R family.

The protein resides in the membrane. It localises to the cell projection. The protein localises to the cilium membrane. In terms of biological role, receptor that may play a role in the perception of bitterness and is gustducin-linked. May play a role in sensing the chemical composition of the gastrointestinal content. The activity of this receptor may stimulate alpha gustducin, mediate PLC-beta-2 activation and lead to the gating of TRPM5. In airway epithelial cells, binding of bitter compounds increases the intracellular calcium ion concentration and stimulates ciliary beat frequency. This Gorilla gorilla gorilla (Western lowland gorilla) protein is Taste receptor type 2 member 46 (TAS2R46).